A 132-amino-acid chain; its full sequence is Two-component response regulator ORR42 (132 aa).

In terms of domain architecture, Response regulatory spans 11 to 125 (RALLVEDIKV…LEHILQETRS (115 aa)). 4-aspartylphosphate is present on aspartate 61.

This sequence belongs to the ARR family. Type-C subfamily. In terms of processing, two-component system major event consists of a His-to-Asp phosphorelay between a sensor histidine kinase (HK) and a response regulator (RR). In plants, the His-to-Asp phosphorelay involves an additional intermediate named Histidine-containing phosphotransfer protein (HPt). This multistep phosphorelay consists of a His-Asp-His-Asp sequential transfer of a phosphate group between first a His and an Asp of the HK protein, followed by the transfer to a conserved His of the HPt protein and finally the transfer to an Asp in the receiver domain of the RR protein.

Functions as a response regulator involved in His-to-Asp phosphorelay signal transduction system. Phosphorylation of the Asp residue in the receiver domain activates the ability of the protein to promote the transcription of target genes. May directly activate some type-A response regulators in response to cytokinins. The protein is Two-component response regulator ORR42 of Oryza sativa subsp. japonica (Rice).